Reading from the N-terminus, the 45-residue chain is Photosystem II reaction center protein K (45 aa).

A propeptide spanning residues 1–8 (MEAALLLA) is cleaved from the precursor. The helical transmembrane segment at 24–44 (LPIIPVFFLLLAFVWQAAVGF) threads the bilayer.

This sequence belongs to the PsbK family. In terms of assembly, PSII is composed of 1 copy each of membrane proteins PsbA, PsbB, PsbC, PsbD, PsbE, PsbF, PsbH, PsbI, PsbJ, PsbK, PsbL, PsbM, PsbT, PsbX, PsbY, PsbZ, Psb30/Ycf12, peripheral proteins PsbO, CyanoQ (PsbQ), PsbU, PsbV and a large number of cofactors. It forms dimeric complexes.

The protein resides in the cellular thylakoid membrane. Its function is as follows. One of the components of the core complex of photosystem II (PSII). PSII is a light-driven water:plastoquinone oxidoreductase that uses light energy to abstract electrons from H(2)O, generating O(2) and a proton gradient subsequently used for ATP formation. It consists of a core antenna complex that captures photons, and an electron transfer chain that converts photonic excitation into a charge separation. This Nostoc sp. (strain PCC 7120 / SAG 25.82 / UTEX 2576) protein is Photosystem II reaction center protein K.